The chain runs to 178 residues: Caveolin-1 (178 aa).

At S2 the chain carries N-acetylserine. At S2 the chain carries Phosphoserine. Positions 2 to 94 (SGGKYVDSEG…WKASFTTFTV (93 aa)) are required for homooligomerization. Residues 2–104 (SGGKYVDSEG…TKYWFYRLLS (103 aa)) are Cytoplasmic-facing. At K5 the chain carries N6-acetyllysine; alternate. A Glycyl lysine isopeptide (Lys-Gly) (interchain with G-Cter in ubiquitin); alternate cross-link involves residue K5. Phosphotyrosine is present on Y6. S9 is subject to Phosphoserine. Position 14 is a phosphotyrosine; by ABL1 (Y14). At Y25 the chain carries Phosphotyrosine. Glycyl lysine isopeptide (Lys-Gly) (interchain with G-Cter in ubiquitin) cross-links involve residues K26, K30, K39, K47, and K57. The interaction with CAVIN3 stretch occupies residues 82–94 (DGIWKASFTTFTV). Positions 105–125 (AVFGIPMALIWGIYFAIVSFL) form an intramembrane region, helical. The Cytoplasmic segment spans residues 126–178 (HIWVVVPYIKSFLIEIQCISRVYSIYIHTFCDPLFEAFGKVFSNIRINTQKEI). The tract at residues 131-142 (VPYIKSFLIEIQ) is interacts with SPRY1, SPRY2, SPRY3 and SPRY4. Residues C143 and C156 are each lipidated (S-palmitoyl cysteine). Positions 149–160 (SIYIHTFCDPLF) are interacts with SPRY1, SPRY2, and SPRY4. The segment at 167–178 (FSNIRINTQKEI) is interacts with SPRY1, SPRY2, SPRY3 and SPRY4.

It belongs to the caveolin family. Homooligomer. Interacts (via the N-terminus) with DPP4; the interaction is direct. Forms a stable heterooligomeric complex with CAV2 that targets to lipid rafts and drives caveolae formation. Interacts with PACSIN2; this interaction induces membrane tubulation. Interacts with BMX, BTK, CTNNB1, CDH1, GLIPR2, JUP, NOSTRIN, SNAP25 and STX1A. Interacts with SLC7A9. Interacts with TGFBR1. Interacts with CAVIN3 (via leucine-zipper domain) in a cholesterol-sensitive manner. Interacts with CAVIN1. Interacts with EHD2 in a cholesterol-dependent manner. Forms a ternary complex with UBXN6 and VCP; mediates CAV1 targeting to lysosomes for degradation. Interacts with ABCG1; this interaction regulates ABCG1-mediated cholesterol efflux. Interacts with NEU3; this interaction enhances NEU3 sialidase activity within caveola. Interacts (via C-terminus) with SPRY1, SPRY2 (via C-terminus), SPRY3, and SPRY4. Phosphorylated at Tyr-14 by ABL1 in response to oxidative stress. In terms of processing, ubiquitinated. Undergo monoubiquitination and multi- and/or polyubiquitination. Monoubiquitination of N-terminal lysines promotes integration in a ternary complex with UBXN6 and VCP which promotes oligomeric CAV1 targeting to lysosomes for degradation. Ubiquitinated by ZNRF1; leading to degradation and modulation of the TLR4-mediated immune response.

The protein localises to the golgi apparatus membrane. The protein resides in the cell membrane. It is found in the membrane. Its subcellular location is the caveola. It localises to the membrane raft. In terms of biological role, may act as a scaffolding protein within caveolar membranes. Forms a stable heterooligomeric complex with CAV2 that targets to lipid rafts and drives caveolae formation. Mediates the recruitment of CAVIN proteins (CAVIN1/2/3/4) to the caveolae. Interacts directly with G-protein alpha subunits and can functionally regulate their activity. Involved in the costimulatory signal essential for T-cell receptor (TCR)-mediated T-cell activation. Its binding to DPP4 induces T-cell proliferation and NF-kappa-B activation in a T-cell receptor/CD3-dependent manner. Recruits CTNNB1 to caveolar membranes and may regulate CTNNB1-mediated signaling through the Wnt pathway. Negatively regulates TGFB1-mediated activation of SMAD2/3 by mediating the internalization of TGFBR1 from membrane rafts leading to its subsequent degradation. Binds 20(S)-hydroxycholesterol (20(S)-OHC). The protein is Caveolin-1 (CAV1) of Rhinolophus ferrumequinum (Greater horseshoe bat).